The chain runs to 455 residues: Probable carboxypeptidase MCYG_07204 (455 aa).

An N-terminal signal peptide occupies residues 1 to 21; sequence MQKTYLLALLVSSLASVRSLA. The N-linked (GlcNAc...) asparagine glycan is linked to Asn93. Residue Asp170 participates in Zn(2+) binding. Catalysis depends on Glu202, which acts as the Proton acceptor. Glu203 contributes to the Zn(2+) binding site. Asn390 carries an N-linked (GlcNAc...) asparagine glycan.

This sequence belongs to the peptidase M20A family. Requires Zn(2+) as cofactor.

The protein localises to the secreted. This chain is Probable carboxypeptidase MCYG_07204, found in Arthroderma otae (strain ATCC MYA-4605 / CBS 113480) (Microsporum canis).